A 250-amino-acid chain; its full sequence is Glycerol uptake facilitator protein-like 5 (250 aa).

2 helical membrane passes run 12–32 (EFFGTLILVLLGNGAVANAFL) and 46–66 (GGWLLVASGYGLGVMLPAMMF). The NPA 1 signature appears at 75-77 (NPA). 3 consecutive transmembrane segments (helical) span residues 85–105 (IGIFPWAHVAPYLIWQFLGAI), 142–162 (LNGFVTEMVGTAVLIFGAMGL), and 172–192 (IDIANIGVGLLIAAMVISLGG). Positions 199 to 201 (NPA) match the NPA 2 motif. The helical transmembrane segment at 230–250 (VVAPIVGAVIGIWIYKIFFGL) threads the bilayer.

Belongs to the MIP/aquaporin (TC 1.A.8) family.

It localises to the cell membrane. Functionally, probable transporter that facilitates the transmembrane diffusion of an unknown substrate. Is not permeable to water, dihydroxyacetone, glycerol, urea, H(2)O(2) and D/L-lactic acid. The protein is Glycerol uptake facilitator protein-like 5 of Lactiplantibacillus plantarum (strain ATCC BAA-793 / NCIMB 8826 / WCFS1) (Lactobacillus plantarum).